A 306-amino-acid chain; its full sequence is Ornithine carbamoyltransferase (306 aa).

Residues 53 to 56 (STRT), Gln80, Arg104, and 131 to 134 (HPCQ) each bind carbamoyl phosphate. Residues Asn162, Asp219, and 223–224 (SM) contribute to the L-ornithine site. Carbamoyl phosphate is bound by residues 259 to 260 (CL) and Arg287.

It belongs to the aspartate/ornithine carbamoyltransferase superfamily. OTCase family.

The protein localises to the cytoplasm. It catalyses the reaction carbamoyl phosphate + L-ornithine = L-citrulline + phosphate + H(+). It functions in the pathway amino-acid biosynthesis; L-arginine biosynthesis; L-arginine from L-ornithine and carbamoyl phosphate: step 1/3. Functionally, reversibly catalyzes the transfer of the carbamoyl group from carbamoyl phosphate (CP) to the N(epsilon) atom of ornithine (ORN) to produce L-citrulline. This Psychrobacter sp. (strain PRwf-1) protein is Ornithine carbamoyltransferase.